The primary structure comprises 350 residues: tRNA uridine(34) hydroxylase (350 aa).

Positions 146-240 (DDPDAVFIDM…YARRAREQGL (95 aa)) constitute a Rhodanese domain. The active-site Cysteine persulfide intermediate is the Cys200. Basic and acidic residues predominate over residues 319–328 (RRRRAGRENG). The interval 319-350 (RRRRAGRENGNKIFNKSRGRLNSKLSIPDPAE) is disordered.

The protein belongs to the TrhO family.

It carries out the reaction uridine(34) in tRNA + AH2 + O2 = 5-hydroxyuridine(34) in tRNA + A + H2O. In terms of biological role, catalyzes oxygen-dependent 5-hydroxyuridine (ho5U) modification at position 34 in tRNAs. This is tRNA uridine(34) hydroxylase from Salmonella gallinarum (strain 287/91 / NCTC 13346).